The sequence spans 223 residues: Movement and silencing protein TGBp1 (223 aa).

The (+)RNA virus helicase ATP-binding domain occupies 1–136; it reads METVLSLLNE…QILRDLGYNI (136 aa). One can recognise a (+)RNA virus helicase C-terminal domain in the interval 137–223; it reads ASSKEDIVEK…HRSKLVLVSN (87 aa).

The protein belongs to the Tymovirales TGBp1 protein family. Homodimer and homooligomer. Interacts with capsid protein. Interacts with host AGO1; this interaction targets the host protein for degradation, thereby suppressing the antiviral RNA silencing.

The protein resides in the host cytoplasm. Transports viral genome to neighboring plant cells directly through plasmosdesmata, without any budding. The movement protein allows efficient cell to cell propagation, by bypassing the host cell wall barrier. Increases plasmodesma size exclusion limit. Acts as a suppressor of RNA-mediated gene silencing, also known as post-transcriptional gene silencing (PTGS), a mechanism of plant viral defense that limits the accumulation of viral RNAs. The sequence is that of Movement and silencing protein TGBp1 from Crataegus (hawthorn).